A 126-amino-acid chain; its full sequence is Large ribosomal subunit protein uL22 (126 aa).

This sequence belongs to the universal ribosomal protein uL22 family. In terms of assembly, part of the 50S ribosomal subunit.

Functionally, this protein binds specifically to 23S rRNA; its binding is stimulated by other ribosomal proteins, e.g. L4, L17, and L20. It is important during the early stages of 50S assembly. It makes multiple contacts with different domains of the 23S rRNA in the assembled 50S subunit and ribosome. The globular domain of the protein is located near the polypeptide exit tunnel on the outside of the subunit, while an extended beta-hairpin is found that lines the wall of the exit tunnel in the center of the 70S ribosome. This Ruegeria sp. (strain TM1040) (Silicibacter sp.) protein is Large ribosomal subunit protein uL22.